We begin with the raw amino-acid sequence, 309 residues long: tRNA uridine(34) hydroxylase (309 aa).

The Rhodanese domain maps to 129-223 (SEPGTIVIDT…YLEEVPAEQS (95 aa)). C183 serves as the catalytic Cysteine persulfide intermediate. Residues 288 to 309 (YAERQRQVELAQARGKRPHIGS) are disordered.

The protein belongs to the TrhO family.

It carries out the reaction uridine(34) in tRNA + AH2 + O2 = 5-hydroxyuridine(34) in tRNA + A + H2O. In terms of biological role, catalyzes oxygen-dependent 5-hydroxyuridine (ho5U) modification at position 34 in tRNAs. The protein is tRNA uridine(34) hydroxylase of Mesorhizobium japonicum (strain LMG 29417 / CECT 9101 / MAFF 303099) (Mesorhizobium loti (strain MAFF 303099)).